We begin with the raw amino-acid sequence, 371 residues long: 3-isopropylmalate dehydrogenase (371 aa).

Substrate contacts are provided by Arg104, Arg114, Arg142, and Asp232. Positions 232, 256, and 260 each coordinate Mg(2+). 290-302 contributes to the NAD(+) binding site; the sequence is GSAPDIAGQDKAN.

Belongs to the isocitrate and isopropylmalate dehydrogenases family. LeuB type 1 subfamily. In terms of assembly, homodimer. Mg(2+) serves as cofactor. The cofactor is Mn(2+).

The protein localises to the cytoplasm. It carries out the reaction (2R,3S)-3-isopropylmalate + NAD(+) = 4-methyl-2-oxopentanoate + CO2 + NADH. It participates in amino-acid biosynthesis; L-leucine biosynthesis; L-leucine from 3-methyl-2-oxobutanoate: step 3/4. Its function is as follows. Catalyzes the oxidation of 3-carboxy-2-hydroxy-4-methylpentanoate (3-isopropylmalate) to 3-carboxy-4-methyl-2-oxopentanoate. The product decarboxylates to 4-methyl-2 oxopentanoate. The protein is 3-isopropylmalate dehydrogenase of Synechococcus sp. (strain JA-2-3B'a(2-13)) (Cyanobacteria bacterium Yellowstone B-Prime).